We begin with the raw amino-acid sequence, 247 residues long: PABIR family member 2 (247 aa).

Positions 1 to 23 (MAQEKMELDLEPDTSYGGTLRRS) are disordered. Ala-2 carries the N-acetylalanine modification. A phosphoserine mark is found at Ser-25, Ser-33, Ser-50, Ser-58, and Leu-63. The segment at 82–104 (ISQSWDESLSLSDSDFDKPEKLY) is disordered. The segment covering 83 to 94 (SQSWDESLSLSD) has biased composition (low complexity). Position 112 is a phosphothreonine (Thr-112). Ser-115 and Ser-119 each carry phosphoserine. Arg-122 is modified (omega-N-methylarginine). Disordered stretches follow at residues 129-152 (VSSS…SQSP), 158-177 (PSVL…SQPK), and 202-230 (DILD…SPVA). Phosphoserine occurs at positions 137 and 141. The segment covering 166–176 (RKGEMETESQP) has biased composition (basic and acidic residues). The span at 202-216 (DILDGSSSSSGLSSD) shows a compositional bias: low complexity.

The protein belongs to the FAM122 family. Isoform 3 and isoform 4 are phosphorylated on Ser-62 and Ser-64.

The protein is PABIR family member 2 of Homo sapiens (Human).